The primary structure comprises 166 residues: NADH-ubiquinone oxidoreductase chain 6 (166 aa).

Transmembrane regions (helical) follow at residues 1–21 (MMYF…AFAS), 26–46 (IYGG…VVSL), 47–67 (GGSF…LVVF), 87–107 (VFTN…YFSG), and 139–159 (CGGW…FVVL).

Belongs to the complex I subunit 6 family. As to quaternary structure, core subunit of respiratory chain NADH dehydrogenase (Complex I) which is composed of 45 different subunits.

The protein localises to the mitochondrion inner membrane. It catalyses the reaction a ubiquinone + NADH + 5 H(+)(in) = a ubiquinol + NAD(+) + 4 H(+)(out). Functionally, core subunit of the mitochondrial membrane respiratory chain NADH dehydrogenase (Complex I) which catalyzes electron transfer from NADH through the respiratory chain, using ubiquinone as an electron acceptor. Essential for the catalytic activity and assembly of complex I. The polypeptide is NADH-ubiquinone oxidoreductase chain 6 (MT-ND6) (Ornithorhynchus anatinus (Duckbill platypus)).